A 291-amino-acid polypeptide reads, in one-letter code: Pituitary-specific positive transcription factor 1 (291 aa).

The short motif at 5–13 (PFTSADTFI) is the 9aaTAD element. Residues 124–198 (MDSPEIRELE…ILSKWLEEAE (75 aa)) form the POU-specific domain. Residues 214-273 (KRKRRTTISIAAKDALERHFGEQNKPSSQEILRMAEELNLEKEVVRVWFCNRRQREKRVK) constitute a DNA-binding region (homeobox).

Belongs to the POU transcription factor family. Class-1 subfamily. Interacts with PITX1. Interacts with LHX3. Interacts with ELK1.

The protein resides in the nucleus. In terms of biological role, transcription factor involved in the specification of the lactotrope, somatotrope, and thyrotrope phenotypes in the developing anterior pituitary. Activates growth hormone and prolactin genes. Specifically binds to the consensus sequence 5'-TAAAT-3'. In Sus scrofa (Pig), this protein is Pituitary-specific positive transcription factor 1 (POU1F1).